Consider the following 722-residue polypeptide: PAB1-binding protein 1 (722 aa).

Residues 1–10 (MKGNFRKRDS) show a composition bias toward basic and acidic residues. Positions 1–38 (MKGNFRKRDSSTNSRKGGNSDSNYTNGGVPNQNNSSMF) are disordered. The span at 11-38 (STNSRKGGNSDSNYTNGGVPNQNNSSMF) shows a compositional bias: polar residues. Residues 51-107 (RQDYLLANSIGSDVTVTVTSGVKYTGLLVSCNLESTNGIDVVLRFPRVADSGVSDSV) enclose the Sm domain. A Phosphoserine modification is found at Ser106. Phosphothreonine is present on Thr193. Ser215 carries the post-translational modification Phosphoserine. Disordered regions lie at residues 305–380 (ALKS…LSSK), 412–488 (SSTL…NPHT), and 683–722 (GSGPSGMPANGSAMHSHGHSRNYHQTSHHGHHNSSTSGHK). Composition is skewed to low complexity over residues 307–316 (KSNSKPNSNK), 338–347 (SSSNSNKNEN), 356–370 (PAAAGAPEGKPPQKT), and 412–421 (SSTLKSNSSL). Lys344 is covalently cross-linked (Glycyl lysine isopeptide (Lys-Gly) (interchain with G-Cter in ubiquitin)). Over residues 429-455 (TPSAKTVSPTTQISAGKSESRRSGSNI) the composition is skewed to polar residues. Ser436 carries the post-translational modification Phosphoserine. The segment covering 456–471 (SQGQSSTGHTTRSSTS) has biased composition (low complexity). Positions 698–722 (SHGHSRNYHQTSHHGHHNSSTSGHK) are enriched in basic residues.

This sequence belongs to the ataxin-2 family. Interacts (via C-terminus) with MKT1 (via C-terminus). Interacts with FIR1, IGO1, LSM12, PBP4 and PAB1.

The protein resides in the cytoplasm. It is found in the nucleus. It localises to the mitochondrion. In terms of biological role, involved in pre-mRNA polyadenylation. May act to repress the ability of PAB1 to negatively regulate polyadenylation. Negative regulator of poly(A) nuclease (PAN) activity. Promotes mating-type switching in mother cells by positively regulating HO mRNA translation. Localizes MKT1 to polysomes. The chain is PAB1-binding protein 1 (PBP1) from Saccharomyces cerevisiae (strain ATCC 204508 / S288c) (Baker's yeast).